The sequence spans 213 residues: Thymidylate kinase (213 aa).

Position 10 to 17 (10 to 17 (GLEGAGKT)) interacts with ATP.

Belongs to the thymidylate kinase family.

The enzyme catalyses dTMP + ATP = dTDP + ADP. In terms of biological role, phosphorylation of dTMP to form dTDP in both de novo and salvage pathways of dTTP synthesis. The polypeptide is Thymidylate kinase (Escherichia coli O7:K1 (strain IAI39 / ExPEC)).